Consider the following 79-residue polypeptide: ATP synthase subunit c (79 aa).

2 helical membrane passes run Ile-11–Leu-31 and Phe-53–Tyr-73.

This sequence belongs to the ATPase C chain family. As to quaternary structure, F-type ATPases have 2 components, F(1) - the catalytic core - and F(0) - the membrane proton channel. F(1) has five subunits: alpha(3), beta(3), gamma(1), delta(1), epsilon(1). F(0) has three main subunits: a(1), b(2) and c(10-14). The alpha and beta chains form an alternating ring which encloses part of the gamma chain. F(1) is attached to F(0) by a central stalk formed by the gamma and epsilon chains, while a peripheral stalk is formed by the delta and b chains.

It localises to the cell inner membrane. Functionally, f(1)F(0) ATP synthase produces ATP from ADP in the presence of a proton or sodium gradient. F-type ATPases consist of two structural domains, F(1) containing the extramembraneous catalytic core and F(0) containing the membrane proton channel, linked together by a central stalk and a peripheral stalk. During catalysis, ATP synthesis in the catalytic domain of F(1) is coupled via a rotary mechanism of the central stalk subunits to proton translocation. Its function is as follows. Key component of the F(0) channel; it plays a direct role in translocation across the membrane. A homomeric c-ring of between 10-14 subunits forms the central stalk rotor element with the F(1) delta and epsilon subunits. The protein is ATP synthase subunit c of Blochmanniella floridana.